Here is a 355-residue protein sequence, read N- to C-terminus: Peptide chain release factor 1 (355 aa).

The residue at position 233 (glutamine 233) is an N5-methylglutamine.

This sequence belongs to the prokaryotic/mitochondrial release factor family. Post-translationally, methylated by PrmC. Methylation increases the termination efficiency of RF1.

It localises to the cytoplasm. Its function is as follows. Peptide chain release factor 1 directs the termination of translation in response to the peptide chain termination codons UAG and UAA. This chain is Peptide chain release factor 1, found in Bacillus mycoides (strain KBAB4) (Bacillus weihenstephanensis).